The chain runs to 78 residues: Large ribosomal subunit protein bL28 (78 aa).

Belongs to the bacterial ribosomal protein bL28 family.

This is Large ribosomal subunit protein bL28 from Klebsiella pneumoniae (strain 342).